Here is a 310-residue protein sequence, read N- to C-terminus: Homoserine kinase (310 aa).

Position 91-101 (91-101 (PIGSGLGSSAC)) interacts with ATP.

This sequence belongs to the GHMP kinase family. Homoserine kinase subfamily.

The protein localises to the cytoplasm. It carries out the reaction L-homoserine + ATP = O-phospho-L-homoserine + ADP + H(+). It participates in amino-acid biosynthesis; L-threonine biosynthesis; L-threonine from L-aspartate: step 4/5. Catalyzes the ATP-dependent phosphorylation of L-homoserine to L-homoserine phosphate. In Escherichia coli O139:H28 (strain E24377A / ETEC), this protein is Homoserine kinase.